Here is an 85-residue protein sequence, read N- to C-terminus: U4-theraphotoxin-Hhn1g (85 aa).

A signal peptide spans 1–22; that stretch reads MKVTLIAILTCAAVLVLHTTAA. Residues 23 to 48 constitute a propeptide that is removed on maturation; sequence EELEAESQLMEVGMPDTELAAVDEER. Disulfide bonds link cysteine 52–cysteine 66, cysteine 56–cysteine 77, and cysteine 71–cysteine 82.

Belongs to the neurotoxin 12 (Hwtx-2) family. 02 (Hwtx-2) subfamily. As to expression, expressed by the venom gland.

It is found in the secreted. Functionally, postsynaptic neurotoxin. The sequence is that of U4-theraphotoxin-Hhn1g from Cyriopagopus hainanus (Chinese bird spider).